Consider the following 262-residue polypeptide: Small ribosomal subunit protein eS1 (262 aa).

Residues 235–253 (HGDGKGSDEPGAKVSRPEA) are compositionally biased toward basic and acidic residues. The tract at residues 235-262 (HGDGKGSDEPGAKVSRPEAYEPPVQESV) is disordered.

Belongs to the eukaryotic ribosomal protein eS1 family. As to quaternary structure, component of the small ribosomal subunit. Mature ribosomes consist of a small (40S) and a large (60S) subunit. The 40S subunit contains about 33 different proteins and 1 molecule of RNA (18S). The 60S subunit contains about 49 different proteins and 3 molecules of RNA (28S, 5.8S and 5S).

Its subcellular location is the cytoplasm. This is Small ribosomal subunit protein eS1 from Triatoma infestans (Assassin bug).